The following is a 671-amino-acid chain: UvrABC system protein B (671 aa).

One can recognise a Helicase ATP-binding domain in the interval 31-414 (DGFEQGEKAQ…ELNQTDHKVE (384 aa)). 44–51 (GATGTGKT) lines the ATP pocket. Positions 97–120 (YYDYYQPEAYVPQSDTYIEKDSSI) match the Beta-hairpin motif. The Helicase C-terminal domain occupies 435–601 (QIDDLVGEVN…TIVKPIRDVI (167 aa)). The region spanning 630 to 665 (QNMIKTLTAQMQEAAKKLDFEEAANLRDAIMDLKKQ) is the UVR domain.

Belongs to the UvrB family. Forms a heterotetramer with UvrA during the search for lesions. Interacts with UvrC in an incision complex.

The protein localises to the cytoplasm. In terms of biological role, the UvrABC repair system catalyzes the recognition and processing of DNA lesions. A damage recognition complex composed of 2 UvrA and 2 UvrB subunits scans DNA for abnormalities. Upon binding of the UvrA(2)B(2) complex to a putative damaged site, the DNA wraps around one UvrB monomer. DNA wrap is dependent on ATP binding by UvrB and probably causes local melting of the DNA helix, facilitating insertion of UvrB beta-hairpin between the DNA strands. Then UvrB probes one DNA strand for the presence of a lesion. If a lesion is found the UvrA subunits dissociate and the UvrB-DNA preincision complex is formed. This complex is subsequently bound by UvrC and the second UvrB is released. If no lesion is found, the DNA wraps around the other UvrB subunit that will check the other stand for damage. The protein is UvrABC system protein B of Lactobacillus johnsonii (strain CNCM I-12250 / La1 / NCC 533).